The chain runs to 303 residues: Histone deacetylase HDT2 (303 aa).

Residues E100–L112 are compositionally biased toward acidic residues. The interval E100–C282 is disordered. The segment covering E119–E133 has biased composition (basic and acidic residues). The span at D154–T203 shows a compositional bias: acidic residues. Basic and acidic residues predominate over residues P204–A217. The C2H2-type zinc finger occupies V277–H300.

Belongs to the histone deacetylase HD2 family. In terms of assembly, multimer. Possibly forms a homotrimer with HDT1 and/or HDT3.

It localises to the nucleus. The protein resides in the nucleolus. Its function is as follows. Mediates the deacetylation of lysine residues on the N-terminal part of the core histones (H2A, H2B, H3 and H4). Histone deacetylation gives a tag for epigenetic repression and plays an important role in transcriptional regulation, cell cycle progression and developmental events. This chain is Histone deacetylase HDT2 (HDT2), found in Zea mays (Maize).